The primary structure comprises 620 residues: Tyrosine-protein kinase ITK/TSK (620 aa).

A PH domain is found at 4–111; the sequence is FILLEEQLIK…WVLALKEETR (108 aa). The segment at 113-149 adopts a Btk-type zinc-finger fold; it reads NNSLVPKYHPNFWMDGKWRCCSQLEKLATGCAQYDPT. The Zn(2+) site is built by H121, C132, C133, and C143. One can recognise an SH3 domain in the interval 171–231; sequence PEETVVIALY…PSSYLVEKSP (61 aa). Y180 is subject to Phosphotyrosine; by autocatalysis. The region spanning 239-338 is the SH2 domain; it reads WYNKSISRDK…GLVTRLRYPV (100 aa). One can recognise a Protein kinase domain in the interval 363–615; it reads LTFVQEIGSG…SRLLRQLAEI (253 aa). ATP contacts are provided by residues 369–377 and K391; that span reads IGSGQFGLV. D482 serves as the catalytic Proton acceptor. The residue at position 512 (Y512) is a Phosphotyrosine; by LCK. The residue at position 565 (S565) is a Phosphoserine.

The protein belongs to the protein kinase superfamily. Tyr protein kinase family. TEC subfamily. As to quaternary structure, homooligomerizes; this association negatively regulates kinase activity. Interacts with PPIA/CYPA; this interaction regulates TCR signal strength via a proline-directed conformational switch in ITK. Interacts with THEMIS. Interacts with FASLG. Interacts with VAV1; this interaction is important for VAV1 localization and TCR-induced actin polarization. Interacts with TBX21. The cofactor is Zn(2+). In terms of processing, phosphorylated at Tyr-512 in the activation loop of the kinase domain by LCK. Subsequent autophosphorylation at Tyr-180 leads to the kinase activation. The autophosphorylated Tyr-180 lies within the substrate binding sequence of the SH3 domain. Post-translationally, ubiquitinated. In terms of tissue distribution, T-cell lines and natural killer cell lines.

Its subcellular location is the cytoplasm. It localises to the nucleus. It carries out the reaction L-tyrosyl-[protein] + ATP = O-phospho-L-tyrosyl-[protein] + ADP + H(+). In terms of biological role, tyrosine kinase that plays an essential role in regulation of the adaptive immune response. Regulates the development, function and differentiation of conventional T-cells and nonconventional NKT-cells. When antigen presenting cells (APC) activate T-cell receptor (TCR), a series of phosphorylation lead to the recruitment of ITK to the cell membrane, in the vicinity of the stimulated TCR receptor, where it is phosphorylated by LCK. Phosphorylation leads to ITK autophosphorylation and full activation. Once activated, phosphorylates PLCG1, leading to the activation of this lipase and subsequent cleavage of its substrates. In turn, the endoplasmic reticulum releases calcium in the cytoplasm and the nuclear activator of activated T-cells (NFAT) translocates into the nucleus to perform its transcriptional duty. Phosphorylates 2 essential adapter proteins: the linker for activation of T-cells/LAT protein and LCP2. Then, a large number of signaling molecules such as VAV1 are recruited and ultimately lead to lymphokine production, T-cell proliferation and differentiation. Required for TCR-mediated calcium response in gamma-delta T-cells, may also be involved in the modulation of the transcriptomic signature in the Vgamma2-positive subset of immature gamma-delta T-cells. Phosphorylates TBX21 at 'Tyr-530' and mediates its interaction with GATA3. In Homo sapiens (Human), this protein is Tyrosine-protein kinase ITK/TSK (ITK).